The chain runs to 433 residues: MKVQPAVQTNDNPRFVSTLTRNTLALILAGGRGTRLKNLTDWRAKPAVPFGGKFRIIDFTLSNCVNSGVRRIGVVTQYKAQSLIRHIQRGWSFLDGRFQEFIELLPAQQRTEEGTWYQGTADAVFQNLDILRTHNPGYVLILGGDHIYKMDYGRILAEHVERQADLTIACLEVPVEDASAFGVMAVDDSWRTTSFAEKPEHPAPIPGKPGHALISMGIYVFNAKFLYEQLIQDHDMDQSSHDFGKDVIPRLVASNARVYAHRFQNSCVNMASGVPYWRDVGTVDAYWKANIDLTTITPDLNLYDEDWPIWTHQEQLPPAKFVFDDDDRRGQALDSMVSGGCIISGATVRRSLLFSNVQIRGYSTIEDSVILPNVSIDRHAYLKRVVVEKECQIPEGLKVGFNPDEDRKHFYVTDDGITLITPEMLGQGIHYIR.

Alpha-D-glucose 1-phosphate-binding positions include Tyr-117, Gly-182, 197–198 (EK), and Ser-215.

It belongs to the bacterial/plant glucose-1-phosphate adenylyltransferase family. Homotetramer.

The enzyme catalyses alpha-D-glucose 1-phosphate + ATP + H(+) = ADP-alpha-D-glucose + diphosphate. It functions in the pathway glycan biosynthesis; glycogen biosynthesis. Its function is as follows. Involved in the biosynthesis of ADP-glucose, a building block required for the elongation reactions to produce glycogen. Catalyzes the reaction between ATP and alpha-D-glucose 1-phosphate (G1P) to produce pyrophosphate and ADP-Glc. The chain is Glucose-1-phosphate adenylyltransferase from Nitrosomonas europaea (strain ATCC 19718 / CIP 103999 / KCTC 2705 / NBRC 14298).